Here is a 359-residue protein sequence, read N- to C-terminus: Peptide chain release factor 1 (359 aa).

The residue at position 235 (glutamine 235) is an N5-methylglutamine.

This sequence belongs to the prokaryotic/mitochondrial release factor family. In terms of processing, methylated by PrmC. Methylation increases the termination efficiency of RF1.

Its subcellular location is the cytoplasm. Peptide chain release factor 1 directs the termination of translation in response to the peptide chain termination codons UAG and UAA. This Chelativorans sp. (strain BNC1) protein is Peptide chain release factor 1.